We begin with the raw amino-acid sequence, 303 residues long: Tyrosine recombinase XerC (303 aa).

A Core-binding (CB) domain is found at 3–89 (IQNDQWVSAF…TLRSFYQFLV (87 aa)). The Tyr recombinase domain occupies 110-297 (KLPSFLYEEE…TKDRLRDVYR (188 aa)). Residues R150, K174, H249, R252, and H275 contribute to the active site. The active-site O-(3'-phospho-DNA)-tyrosine intermediate is Y284.

Belongs to the 'phage' integrase family. XerC subfamily. Forms a cyclic heterotetrameric complex composed of two molecules of XerC and two molecules of XerD.

It localises to the cytoplasm. Site-specific tyrosine recombinase, which acts by catalyzing the cutting and rejoining of the recombining DNA molecules. The XerC-XerD complex is essential to convert dimers of the bacterial chromosome into monomers to permit their segregation at cell division. It also contributes to the segregational stability of plasmids. This chain is Tyrosine recombinase XerC, found in Halalkalibacterium halodurans (strain ATCC BAA-125 / DSM 18197 / FERM 7344 / JCM 9153 / C-125) (Bacillus halodurans).